We begin with the raw amino-acid sequence, 1234 residues long: ATP-dependent helicase/nuclease subunit A (1234 aa).

Residues 2–475 (TQFTTSQQAA…IILAENFRST (474 aa)) enclose the UvrD-like helicase ATP-binding domain. 23 to 30 (ASAGSGKT) contacts ATP. One can recognise a UvrD-like helicase C-terminal domain in the interval 507-806 (YGALDYGDAH…KLMTIHKSKG (300 aa)).

It belongs to the helicase family. AddA subfamily. In terms of assembly, heterodimer of AddA and AddB/RexB. The cofactor is Mg(2+).

The catalysed reaction is Couples ATP hydrolysis with the unwinding of duplex DNA by translocating in the 3'-5' direction.. The enzyme catalyses ATP + H2O = ADP + phosphate + H(+). Its function is as follows. The heterodimer acts as both an ATP-dependent DNA helicase and an ATP-dependent, dual-direction single-stranded exonuclease. Recognizes the chi site generating a DNA molecule suitable for the initiation of homologous recombination. The AddA nuclease domain is required for chi fragment generation; this subunit has the helicase and 3' -&gt; 5' nuclease activities. This chain is ATP-dependent helicase/nuclease subunit A, found in Lacticaseibacillus paracasei (strain ATCC 334 / BCRC 17002 / CCUG 31169 / CIP 107868 / KCTC 3260 / NRRL B-441) (Lactobacillus paracasei).